Reading from the N-terminus, the 206-residue chain is MSSIEPKVMMVGANKKQRTVQASSRKGCMRGKGGPDNASCTYKGVRQRTWGKWVAEIREPNRGARLWLGTFDTSREAALAYDSAARKLYGPEAHLNLPESLRSYPKTASSPASQTTPSSNTGGKSSSDSESPCSSNEMSSCGRVTEEISWEHINVDLPVMDDSSIWEEATMSLGFPWVHEGDNDISRFDTCISGGYSNWDSFHSPL.

Residues 13–40 (ANKKQRTVQASSRKGCMRGKGGPDNASC) are disordered. A DNA-binding region (AP2/ERF) is located at residues 41–98 (TYKGVRQRTWGKWVAEIREPNRGARLWLGTFDTSREAALAYDSAARKLYGPEAHLNLP). Residues 102–139 (RSYPKTASSPASQTTPSSNTGGKSSSDSESPCSSNEMS) are disordered. Low complexity predominate over residues 107 to 139 (TASSPASQTTPSSNTGGKSSSDSESPCSSNEMS).

Belongs to the AP2/ERF transcription factor family. ERF subfamily.

Its subcellular location is the nucleus. Its function is as follows. Putative transcriptional activator that binds specifically to the DNA sequence 5'-[AG]CCGAC-3'. Binding to the C-repeat/DRE element mediates high salinity-inducible transcription. This is Dehydration-responsive element-binding protein 2D (DREB2D) from Arabidopsis thaliana (Mouse-ear cress).